The primary structure comprises 299 residues: MSAKPEVSLVREASRQIVAGGSAGLVEICLMHPLDVVKTRFQIQRCATDPNSYKSLVDSFRMIFQMEGLFGFYKGILPPILAETPKRAVKFFTFEQYKKLLGYVSLSPALTFAIAGLGSGLTEAIVVNPFEVVKVGLQANRNTFAEQPSTVGYARQIIKKEGWGLQGLNKGLTATLGRHGVFNMVYFGFYYNVKNMIPVNKDPILEFWRKFGIGLLSGTIASVINIPFDVAKSRIQGPQPVPGEIKYRTCFKTMATVYQEEGILALYKGLLPKIMRLGPGGAVMLLVYEYTYSWLQENW.

Solcar repeat units follow at residues 11-100 (REAS…YKKL), 107-196 (SPAL…VKNM), and 205-294 (LEFW…TYSW). 6 helical membrane-spanning segments follow: residues 17 to 37 (IVAG…LDVV), 70 to 89 (FGFY…KRAV), 113 to 133 (AIAG…FEVV), 167 to 187 (GLNK…MVYF), 205 to 225 (LEFW…SVIN), and 277 to 297 (LGPG…WLQE).

The protein belongs to the mitochondrial carrier (TC 2.A.29) family. In terms of tissue distribution, expressed in placenta, gall bladder and colon.

Its subcellular location is the mitochondrion inner membrane. The catalysed reaction is 2-oxoadipate(in) + 2-oxoglutarate(out) = 2-oxoadipate(out) + 2-oxoglutarate(in). It carries out the reaction hexanedioate(in) + 2-oxoglutarate(out) = hexanedioate(out) + 2-oxoglutarate(in). It catalyses the reaction L-2-aminoadipate(in) + 2-oxoglutarate(out) = L-2-aminoadipate(out) + 2-oxoglutarate(in). The enzyme catalyses glutarate(in) + 2-oxoglutarate(out) = glutarate(out) + 2-oxoglutarate(in). The catalysed reaction is 2-oxoheptanedioate(in) + 2-oxoglutarate(out) = 2-oxoheptanedioate(out) + 2-oxoglutarate(in). It carries out the reaction heptanedioate(in) + 2-oxoglutarate(out) = heptanedioate(out) + 2-oxoglutarate(in). It catalyses the reaction citrate(in) + 2-oxoglutarate(out) = citrate(out) + 2-oxoglutarate(in). Functionally, transports dicarboxylates across the inner membranes of mitochondria by a counter-exchange mechanism. Can transport 2-oxoadipate (2-oxohexanedioate), 2-oxoglutarate, adipate (hexanedioate), glutarate, and to a lesser extent, pimelate (heptanedioate), 2-oxopimelate (2-oxoheptanedioate), 2-aminoadipate (2-aminohexanedioate), oxaloacetate, and citrate. Plays a central role in catabolism of lysine, hydroxylysine, and tryptophan, by transporting common metabolite intermediates (such as 2-oxoadipate) into the mitochondria, where it is converted into acetyl-CoA and can enter the citric acid (TCA) cycle. In Homo sapiens (Human), this protein is Mitochondrial 2-oxodicarboxylate carrier (SLC25A21).